We begin with the raw amino-acid sequence, 444 residues long: tRNA-2-methylthio-N(6)-dimethylallyladenosine synthase (444 aa).

The MTTase N-terminal domain occupies 7–121 (KTFHVKSFGC…LPELIARAER (115 aa)). [4Fe-4S] cluster-binding residues include Cys-16, Cys-52, Cys-84, Cys-158, Cys-162, and Cys-165. Residues 144-376 (GNQRPTAFLT…QALLNEQQQA (233 aa)) enclose the Radical SAM core domain. The region spanning 379–441 (EATVGRTTRL…PNSLGAEPLM (63 aa)) is the TRAM domain.

This sequence belongs to the methylthiotransferase family. MiaB subfamily. As to quaternary structure, monomer. Requires [4Fe-4S] cluster as cofactor.

The protein localises to the cytoplasm. The catalysed reaction is N(6)-dimethylallyladenosine(37) in tRNA + (sulfur carrier)-SH + AH2 + 2 S-adenosyl-L-methionine = 2-methylsulfanyl-N(6)-dimethylallyladenosine(37) in tRNA + (sulfur carrier)-H + 5'-deoxyadenosine + L-methionine + A + S-adenosyl-L-homocysteine + 2 H(+). Its function is as follows. Catalyzes the methylthiolation of N6-(dimethylallyl)adenosine (i(6)A), leading to the formation of 2-methylthio-N6-(dimethylallyl)adenosine (ms(2)i(6)A) at position 37 in tRNAs that read codons beginning with uridine. In Sphingopyxis alaskensis (strain DSM 13593 / LMG 18877 / RB2256) (Sphingomonas alaskensis), this protein is tRNA-2-methylthio-N(6)-dimethylallyladenosine synthase.